A 392-amino-acid chain; its full sequence is 5-azacytidine-induced protein 2 (392 aa).

A homodimerization region spans residues M1–D197. 2 coiled-coil regions span residues A40–R76 and D102–T196. The segment at S216–C257 is interaction with TBK1 and IKBKE. 2 positions are modified to phosphoserine: S318 and S353.

In terms of assembly, homodimer. Interacts with IKBKE. Interacts with TBK1. Interacts with TICAM1. Interacts with TAX1BP1. Interacts with CALCOCO2. (Microbial infection) Interacts with vaccinia virus protein C6. In terms of processing, ubiquitinated via 'Lys-48'-linked polyubiquitination by TRIM38, leading to its degradation. In terms of tissue distribution, widely expressed. Abundant expression seen in the pancreas and testis.

Its subcellular location is the cytoplasm. Its function is as follows. Adapter protein which binds TBK1 and IKBKE playing a role in antiviral innate immunity. Activates serine/threonine-protein kinase TBK1 and facilitates its oligomerization. Enhances the phosphorylation of NF-kappa-B p65 subunit RELA by TBK1. Promotes TBK1-induced as well as TNF-alpha or PMA-induced activation of NF-kappa-B. Participates in IFNB promoter activation via TICAM1. This Homo sapiens (Human) protein is 5-azacytidine-induced protein 2 (AZI2).